A 268-amino-acid polypeptide reads, in one-letter code: Protein c-ets-1-B (268 aa).

The helix HI-1 stretch occupies residues 131–139 (FKDYVRDRA). The interval 150-157 (AAALAGYT) is helix HI-2. The segment at residues 162–242 (IQLWQFLLEL…AGKRYVYRFV (81 aa)) is a DNA-binding region (ETS). The interval 245–249 (LQSLL) is helix H4. Positions 253–259 (PEELHAM) are helix H5.

It belongs to the ETS family. In terms of assembly, binds DNA as a homodimer; homodimerization is required for transcription activation.

It localises to the nucleus. Its subcellular location is the cytoplasm. Autoinhibited by a module composed of four alpha helices (HI-1, HI-2, H4, and H5) that flank the DNA-binding ETS domain, reducing the affinity for DNA. Transcription factor. Directly controls the expression of cytokine and chemokine genes in a wide variety of different cellular contexts. The chain is Protein c-ets-1-B (ets1-b) from Xenopus laevis (African clawed frog).